Consider the following 488-residue polypeptide: Endoglucanase A (488 aa).

Substrate contacts are provided by residues H59, 63 to 64 (WY), Y90, and H125. Residue E163 is the Proton donor of the active site. Y226 provides a ligand contact to substrate. E252 serves as the catalytic Nucleophile. Residues 258 to 259 (AT), W286, and 291 to 293 (KDE) contribute to the substrate site. 2 disordered regions span residues 326 to 362 (ESAS…AWDP) and 388 to 451 (EPGA…WDPT). Composition is skewed to pro residues over residues 332-353 (PSDP…PPSD) and 405-416 (PSEPSDPPPPSE). A compositionally biased stretch (acidic residues) spans 417 to 433 (PEPDPGEPDPGEPDPGE).

It belongs to the glycosyl hydrolase 5 (cellulase A) family.

It catalyses the reaction Endohydrolysis of (1-&gt;4)-beta-D-glucosidic linkages in cellulose, lichenin and cereal beta-D-glucans.. This is Endoglucanase A (celA) from Evansella cellulosilytica (strain ATCC 21833 / DSM 2522 / FERM P-1141 / JCM 9156 / N-4) (Bacillus cellulosilyticus).